The chain runs to 150 residues: Large ribosomal subunit protein bL9 (150 aa).

The protein belongs to the bacterial ribosomal protein bL9 family.

Its function is as follows. Binds to the 23S rRNA. In Shewanella putrefaciens (strain CN-32 / ATCC BAA-453), this protein is Large ribosomal subunit protein bL9.